Consider the following 70-residue polypeptide: MSATTAAVPFWRAAGMTYIGYSNICAALVRNCLKEPFKSEAASREKVHFSISKWTDGKQEKPTVRTESDD.

This sequence belongs to the eukaryotic ATPase epsilon family. F-type ATPases have 2 components, CF(1) - the catalytic core - and CF(0) - the membrane proton channel. CF(1) has five subunits: alpha(3), beta(3), gamma(1), delta(1), epsilon(1). CF(0) has three main subunits: a, b and c.

The protein localises to the mitochondrion. Its subcellular location is the mitochondrion inner membrane. Its function is as follows. Mitochondrial membrane ATP synthase (F(1)F(0) ATP synthase or Complex V) produces ATP from ADP in the presence of a proton gradient across the membrane which is generated by electron transport complexes of the respiratory chain. F-type ATPases consist of two structural domains, F(1) - containing the extramembraneous catalytic core, and F(0) - containing the membrane proton channel, linked together by a central stalk and a peripheral stalk. During catalysis, ATP synthesis in the catalytic domain of F(1) is coupled via a rotary mechanism of the central stalk subunits to proton translocation. Part of the complex F(1) domain and of the central stalk which is part of the complex rotary element. Rotation of the central stalk against the surrounding alpha(3)beta(3) subunits leads to hydrolysis of ATP in three separate catalytic sites on the beta subunits. The protein is ATP synthase subunit epsilon, mitochondrial of Zea mays (Maize).